The chain runs to 172 residues: Adenine phosphoribosyltransferase (172 aa).

Belongs to the purine/pyrimidine phosphoribosyltransferase family. In terms of assembly, homodimer.

The protein localises to the cytoplasm. It carries out the reaction AMP + diphosphate = 5-phospho-alpha-D-ribose 1-diphosphate + adenine. It functions in the pathway purine metabolism; AMP biosynthesis via salvage pathway; AMP from adenine: step 1/1. In terms of biological role, catalyzes a salvage reaction resulting in the formation of AMP, that is energically less costly than de novo synthesis. The sequence is that of Adenine phosphoribosyltransferase from Streptococcus uberis (strain ATCC BAA-854 / 0140J).